Here is a 92-residue protein sequence, read N- to C-terminus: Long neurotoxin 77 (92 aa).

The signal sequence occupies residues 1–21 (MKTLLLTLVVVTIVCLDLGDS). 5 disulfides stabilise this stretch: C24-C41, C34-C62, C47-C51, C66-C77, and C78-C83.

It belongs to the three-finger toxin family. Long-chain subfamily. Type II alpha-neurotoxin sub-subfamily. As to expression, expressed by the venom gland.

The protein localises to the secreted. Binds with high affinity to muscular (alpha-1/CHRNA1) and neuronal (alpha-7/CHRNA7) nicotinic acetylcholine receptor (nAChR) and inhibits acetylcholine from binding to the receptor, thereby impairing neuromuscular and neuronal transmission. The polypeptide is Long neurotoxin 77 (Drysdalia coronoides (White-lipped snake)).